A 119-amino-acid polypeptide reads, in one-letter code: Enhancer of yellow 2 transcription factor (119 aa).

The disordered stretch occupies residues 93–119 (LTENETEGTDNHDDDEDDEDENGTEDN). The segment covering 96–119 (NETEGTDNHDDDEDDEDENGTEDN) has biased composition (acidic residues).

The protein belongs to the ENY2 family. In terms of assembly, component of the nuclear pore complex (NPC)-associated AMEX complex (anchoring and mRNA export complex), composed of at least e(y)2 and xmas-2. Component of the SAGA transcription coactivator-HAT complexes, at least composed of Ada2b, e(y)2, Pcaf/Gcn5, Taf10 and Nipped-A/Trrap. Within the SAGA complex, e(y)2, Sgf11, and not/nonstop form an additional subcomplex of SAGA called the DUB module (deubiquitination module). Component of the THO complex, composed of at least e(y)2, HPR1, THO2, THOC5, THOC6 and THOC7. Interacts with e(y)1. Interacts with su(Hw) (via zinc fingers). Interacts with xmas-2; required for localization to the nuclear periphery. Interacts with the nuclear pore complex (NPC).

The protein resides in the nucleus. Its subcellular location is the nucleoplasm. It localises to the cytoplasm. Its function is as follows. Involved in mRNA export coupled transcription activation by association with both the AMEX and the SAGA complexes. The SAGA complex is a multiprotein complex that activates transcription by remodeling chromatin and mediating histone acetylation and deubiquitination. Within the SAGA complex, participates in a subcomplex that specifically deubiquitinates histone H2B. The SAGA complex is recruited to specific gene promoters by activators, where it is required for transcription. Required for nuclear receptor-mediated transactivation. Involved in transcription elongation by recruiting the THO complex onto nascent mRNA. The AMEX complex functions in docking export-competent ribonucleoprotein particles (mRNPs) to the nuclear entrance of the nuclear pore complex (nuclear basket). AMEX participates in mRNA export and accurate chromatin positioning in the nucleus by tethering genes to the nuclear periphery. This is Enhancer of yellow 2 transcription factor from Drosophila willistoni (Fruit fly).